Consider the following 219-residue polypeptide: Imidazole glycerol phosphate synthase subunit HisH (219 aa).

In terms of domain architecture, Glutamine amidotransferase type-1 spans 4–216; that stretch reads TVTVLDYGSG…VDSLPATGRN (213 aa). The Nucleophile role is filled by C82. Catalysis depends on residues H191 and E193.

Heterodimer of HisH and HisF.

The protein resides in the cytoplasm. The catalysed reaction is 5-[(5-phospho-1-deoxy-D-ribulos-1-ylimino)methylamino]-1-(5-phospho-beta-D-ribosyl)imidazole-4-carboxamide + L-glutamine = D-erythro-1-(imidazol-4-yl)glycerol 3-phosphate + 5-amino-1-(5-phospho-beta-D-ribosyl)imidazole-4-carboxamide + L-glutamate + H(+). It carries out the reaction L-glutamine + H2O = L-glutamate + NH4(+). It participates in amino-acid biosynthesis; L-histidine biosynthesis; L-histidine from 5-phospho-alpha-D-ribose 1-diphosphate: step 5/9. Its function is as follows. IGPS catalyzes the conversion of PRFAR and glutamine to IGP, AICAR and glutamate. The HisH subunit catalyzes the hydrolysis of glutamine to glutamate and ammonia as part of the synthesis of IGP and AICAR. The resulting ammonia molecule is channeled to the active site of HisF. The protein is Imidazole glycerol phosphate synthase subunit HisH of Renibacterium salmoninarum (strain ATCC 33209 / DSM 20767 / JCM 11484 / NBRC 15589 / NCIMB 2235).